Reading from the N-terminus, the 483-residue chain is Glutamyl-tRNA(Gln) amidotransferase subunit A (483 aa).

Catalysis depends on charge relay system residues lysine 76 and serine 151. Catalysis depends on serine 175, which acts as the Acyl-ester intermediate.

The protein belongs to the amidase family. GatA subfamily. As to quaternary structure, heterotrimer of A, B and C subunits.

It carries out the reaction L-glutamyl-tRNA(Gln) + L-glutamine + ATP + H2O = L-glutaminyl-tRNA(Gln) + L-glutamate + ADP + phosphate + H(+). In terms of biological role, allows the formation of correctly charged Gln-tRNA(Gln) through the transamidation of misacylated Glu-tRNA(Gln) in organisms which lack glutaminyl-tRNA synthetase. The reaction takes place in the presence of glutamine and ATP through an activated gamma-phospho-Glu-tRNA(Gln). The chain is Glutamyl-tRNA(Gln) amidotransferase subunit A from Ectopseudomonas mendocina (strain ymp) (Pseudomonas mendocina).